A 244-amino-acid chain; its full sequence is Proteasome subunit alpha (244 aa).

Belongs to the peptidase T1A family. The 20S proteasome core is composed of 14 alpha and 14 beta subunits that assemble into four stacked heptameric rings, resulting in a barrel-shaped structure. The two inner rings, each composed of seven catalytic beta subunits, are sandwiched by two outer rings, each composed of seven alpha subunits. The catalytic chamber with the active sites is on the inside of the barrel. Has a gated structure, the ends of the cylinder being occluded by the N-termini of the alpha-subunits. Is capped by the proteasome-associated ATPase, ARC.

It localises to the cytoplasm. The protein operates within protein degradation; proteasomal Pup-dependent pathway. The formation of the proteasomal ATPase ARC-20S proteasome complex, likely via the docking of the C-termini of ARC into the intersubunit pockets in the alpha-rings, may trigger opening of the gate for substrate entry. Interconversion between the open-gate and close-gate conformations leads to a dynamic regulation of the 20S proteasome proteolysis activity. Functionally, component of the proteasome core, a large protease complex with broad specificity involved in protein degradation. The chain is Proteasome subunit alpha from Xylanimonas cellulosilytica (strain DSM 15894 / JCM 12276 / CECT 5975 / KCTC 9989 / LMG 20990 / NBRC 107835 / XIL07).